The sequence spans 450 residues: tRNA-2-methylthio-N(6)-dimethylallyladenosine synthase (450 aa).

The region spanning 3 to 119 is the MTTase N-terminal domain; the sequence is RRYYITTFGC…LGELLEQVWN (117 aa). Residues Cys12, Cys48, Cys82, Cys154, Cys158, and Cys161 each coordinate [4Fe-4S] cluster. One can recognise a Radical SAM core domain in the interval 140–377; it reads RDSTVTAWVN…NHLVAKIAGD (238 aa). A TRAM domain is found at 380-444; sequence QRYLGREEVV…AFSLSGVPLA (65 aa).

Belongs to the methylthiotransferase family. MiaB subfamily. As to quaternary structure, monomer. The cofactor is [4Fe-4S] cluster.

The protein localises to the cytoplasm. It catalyses the reaction N(6)-dimethylallyladenosine(37) in tRNA + (sulfur carrier)-SH + AH2 + 2 S-adenosyl-L-methionine = 2-methylsulfanyl-N(6)-dimethylallyladenosine(37) in tRNA + (sulfur carrier)-H + 5'-deoxyadenosine + L-methionine + A + S-adenosyl-L-homocysteine + 2 H(+). Catalyzes the methylthiolation of N6-(dimethylallyl)adenosine (i(6)A), leading to the formation of 2-methylthio-N6-(dimethylallyl)adenosine (ms(2)i(6)A) at position 37 in tRNAs that read codons beginning with uridine. This is tRNA-2-methylthio-N(6)-dimethylallyladenosine synthase from Thermosynechococcus vestitus (strain NIES-2133 / IAM M-273 / BP-1).